A 128-amino-acid polypeptide reads, in one-letter code: UPF0102 protein MAV_3752 (128 aa).

Belongs to the UPF0102 family.

In Mycobacterium avium (strain 104), this protein is UPF0102 protein MAV_3752.